Consider the following 245-residue polypeptide: tRNA (guanine-N(1)-)-methyltransferase (245 aa).

S-adenosyl-L-methionine is bound by residues G111 and 131-136; that span reads MGDYVL.

This sequence belongs to the RNA methyltransferase TrmD family. Homodimer.

It is found in the cytoplasm. It carries out the reaction guanosine(37) in tRNA + S-adenosyl-L-methionine = N(1)-methylguanosine(37) in tRNA + S-adenosyl-L-homocysteine + H(+). Functionally, specifically methylates guanosine-37 in various tRNAs. This Staphylococcus aureus (strain Mu3 / ATCC 700698) protein is tRNA (guanine-N(1)-)-methyltransferase.